The following is a 329-amino-acid chain: Tryptophan--tRNA ligase (329 aa).

ATP contacts are provided by residues 9-11 (QPS) and 17-18 (GN). A 'HIGH' region motif is present at residues 10–18 (PSGTITLGN). An L-tryptophan-binding site is contributed by Asp132. ATP contacts are provided by residues 144–146 (GDD), Val183, and 192–196 (KMSKS). The 'KMSKS' region motif lies at 192-196 (KMSKS).

Belongs to the class-I aminoacyl-tRNA synthetase family. In terms of assembly, homodimer.

Its subcellular location is the cytoplasm. It catalyses the reaction tRNA(Trp) + L-tryptophan + ATP = L-tryptophyl-tRNA(Trp) + AMP + diphosphate + H(+). Catalyzes the attachment of tryptophan to tRNA(Trp). In Bacillus anthracis, this protein is Tryptophan--tRNA ligase.